The sequence spans 164 residues: Small ribosomal subunit protein uS3m (164 aa).

The N-terminal 23 residues, 1–23 (MLRSIQHVEALSSRQISTTSMLL), are a transit peptide targeting the mitochondrion.

The protein belongs to the universal ribosomal protein uS3 family. Component of the mitochondrial ribosome small subunit (28S) which comprises a 12S rRNA and about 30 distinct proteins.

The protein resides in the mitochondrion. The polypeptide is Small ribosomal subunit protein uS3m (mrps-24) (Caenorhabditis elegans).